The primary structure comprises 144 residues: IgW chain C region, secreted form 1/3 (144 aa).

The Ig-like domain maps to V1–S82. 3 N-linked (GlcNAc...) asparagine glycosylation sites follow: N3, N43, and N123. A disulfide bridge connects residues C11 and C68. Positions K87–K144 are secretory tail.

Expressed mainly in lymphoid tissues including spleen, epigonal organ and circulating lymphocytes.

It is found in the secreted. The polypeptide is IgW chain C region, secreted form 1/3 (Heterodontus francisci (Horn shark)).